A 216-amino-acid polypeptide reads, in one-letter code: MSAARKRPGTGRRQTDDADTGAPDQSYLDGQLLIAMPVMEDERFARSVIYVCAHSSEGAMGIILNRPAGSVDFADLLVQLDIIKRSDSIKLPETAEAMKVMKGGPVETGRGFVLHSSDFFIEDATLPIDDGVCLTATLDILEAIAKGAGPKHAILALGYAGWAPGQLETEIQDNGWLHCPADPELIFGRDIEDKYTRALHKIGIDPGMLSNEAGHA.

Basic residues predominate over residues 1-10; the sequence is MSAARKRPGT. The segment at 1–25 is disordered; that stretch reads MSAARKRPGTGRRQTDDADTGAPDQ.

It belongs to the UPF0301 (AlgH) family.

This chain is UPF0301 protein Nham_3550, found in Nitrobacter hamburgensis (strain DSM 10229 / NCIMB 13809 / X14).